The following is a 248-amino-acid chain: 1-(5-phosphoribosyl)-5-[(5-phosphoribosylamino)methylideneamino] imidazole-4-carboxamide isomerase (248 aa).

D8 acts as the Proton acceptor in catalysis. The active-site Proton donor is the D129.

It belongs to the HisA/HisF family.

The protein resides in the cytoplasm. It carries out the reaction 1-(5-phospho-beta-D-ribosyl)-5-[(5-phospho-beta-D-ribosylamino)methylideneamino]imidazole-4-carboxamide = 5-[(5-phospho-1-deoxy-D-ribulos-1-ylimino)methylamino]-1-(5-phospho-beta-D-ribosyl)imidazole-4-carboxamide. It participates in amino-acid biosynthesis; L-histidine biosynthesis; L-histidine from 5-phospho-alpha-D-ribose 1-diphosphate: step 4/9. The polypeptide is 1-(5-phosphoribosyl)-5-[(5-phosphoribosylamino)methylideneamino] imidazole-4-carboxamide isomerase (Rhizobium leguminosarum bv. trifolii (strain WSM2304)).